The chain runs to 348 residues: Anthranilate phosphoribosyltransferase (348 aa).

5-phospho-alpha-D-ribose 1-diphosphate is bound by residues Gly83, 86–87 (GD), Thr91, 93–96 (NVST), 111–119 (KHGNRAASS), and Thr123. Gly83 is an anthranilate binding site. Ser95 provides a ligand contact to Mg(2+). Anthranilate is bound at residue Asn114. Position 169 (Arg169) interacts with anthranilate. Positions 227 and 228 each coordinate Mg(2+).

It belongs to the anthranilate phosphoribosyltransferase family. In terms of assembly, homodimer. Mg(2+) serves as cofactor.

It catalyses the reaction N-(5-phospho-beta-D-ribosyl)anthranilate + diphosphate = 5-phospho-alpha-D-ribose 1-diphosphate + anthranilate. The protein operates within amino-acid biosynthesis; L-tryptophan biosynthesis; L-tryptophan from chorismate: step 2/5. Catalyzes the transfer of the phosphoribosyl group of 5-phosphorylribose-1-pyrophosphate (PRPP) to anthranilate to yield N-(5'-phosphoribosyl)-anthranilate (PRA). The sequence is that of Anthranilate phosphoribosyltransferase from Thermobifida fusca (strain YX).